The sequence spans 468 residues: H(+)/Cl(-) exchange transporter ClcA (468 aa).

Over 1–30 the chain is Cytoplasmic; it reads MSTRETFKISLLAKMPKDVINQFLSKDKTP. Residues 31–67 form a helical membrane-spanning segment; sequence FSVLFLSLLVGILAGLVGTYFEQAVHLVSETRTDWLK. The Periplasmic segment spans residues 68-74; it reads SEIGSFL. Residues 75-98 form a helical membrane-spanning segment; sequence PLWLAAFLISAFLAFIGYFLVHRF. Residues 104–108 carry the Selectivity filter part_1 motif; that stretch reads GSGIP. Position 105 (Ser-105) interacts with chloride. Residues 107-114 constitute an intramembrane region (helical); it reads IPEIEGAM. At 115-121 the chain is on the cytoplasmic side; that stretch reads DGMRPVR. A run of 2 helical transmembrane segments spans residues 122–139 and 146–164; these read WWRV…ALGS and EGPT…SDIF. The short motif at 144–148 is the Selectivity filter part_2 element; sequence GREGP. Residues 165 to 174 are Cytoplasmic-facing; that stretch reads RVKNEDTRHS. 2 consecutive intramembrane regions (helical) follow at residues 175 to 187 and 191 to 199; these read LLAA…LAAA and PLAGIMFVI. Residues 200–212 lie on the Cytoplasmic side of the membrane; the sequence is EEMRPQFRYTLIS. Residues 213-230 form a helical membrane-spanning segment; that stretch reads VRAVIISAVAANIVFRVI. Residues 231–250 are Periplasmic-facing; sequence NGQDAVITMPQYDAPELSTL. The chain crosses the membrane as a helical span at residues 251–279; it reads GLFLLLGALFGVFGVLFNYLITLAQDLFV. The Cytoplasmic segment spans residues 280-285; that stretch reads KFHRND. A helical transmembrane segment spans residues 286-307; sequence RKRYLLTGSMIGGCFGLLLLYV. Topologically, residues 308–327 are periplasmic; the sequence is PELTGGGISLIPTITNGGYG. The next 2 helical transmembrane spans lie at 328 to 347 and 353 to 374; these read AGIL…LCFG and GIFA…LIAK. The Selectivity filter part_3 motif lies at 353–357; that stretch reads GIFAP. Ile-354 and Phe-355 together coordinate chloride. The Periplasmic segment spans residues 375-384; sequence VWFPELNIEP. An intramembrane region (helical) is located at residues 385-399; it reads GMFAIAGMGALFAAT. The segment at residues 400–402 is an intramembrane region (note=Loop between two helices); it reads VRA. Residues 403 to 414 constitute an intramembrane region (helical); that stretch reads PITGILLVIEMT. Positions 415–419 form an intramembrane region, note=Loop between two helices; that stretch reads NNYHL. A helical membrane pass occupies residues 420–436; the sequence is ILPLIITSLGAVIFAQL. Over 437–468 the chain is Cytoplasmic; that stretch reads LGGQPIYSQLLHRTLKNQKLQQQDLPPQSPNS. Position 443 (Tyr-443) interacts with chloride.

This sequence belongs to the chloride channel (TC 2.A.49) family. ClcA subfamily. As to quaternary structure, homodimer.

It localises to the cell inner membrane. The catalysed reaction is 2 chloride(in) + H(+)(out) = 2 chloride(out) + H(+)(in). In terms of biological role, proton-coupled chloride transporter. Functions as antiport system and exchanges two chloride ions for 1 proton. Probably acts as an electrical shunt for an outwardly-directed proton pump that is linked to amino acid decarboxylation, as part of the extreme acid resistance (XAR) response. This is H(+)/Cl(-) exchange transporter ClcA from Vibrio cholerae serotype O1 (strain ATCC 39541 / Classical Ogawa 395 / O395).